The following is a 171-amino-acid chain: MKLKKTIGAMALATLFATMGASAVEKTISVTASVDPTVDLLQSDGSALPNSVALTYSPAVNNFEAHTINTVVHTNDSDKGVVVKLSADPVLSNVLNPTLQIPVSVNFAGKPLSTTGITIDSNDLNFASSGVNKVSSTQKLSIHADATRVTGGALTAGQYQGLVSIILTKST.

An N-terminal signal peptide occupies residues 1 to 23 (MKLKKTIGAMALATLFATMGASA).

It belongs to the fimbrial CS1 protein family.

The protein localises to the fimbrium. Fimbriae (also called pili), polar filaments radiating from the surface of the bacterium to a length of 0.5-1.5 micrometers and numbering 100-300 per cell, enable bacteria to colonize the epithelium of specific host organs. The protein is CS1 fimbrial subunit A (csoA) of Escherichia coli.